The sequence spans 2028 residues: Phosphatidylinositol 4-kinase alpha 1 (2028 aa).

The disordered stretch occupies residues 184–241; the sequence is PASPKEQRQQNSANSETDTSSSQGSPISTNRYPSGKTEMASPGDEVASHGSNLSSKSS. Polar residues predominate over residues 192–215; it reads QQNSANSETDTSSSQGSPISTNRY. Residues 231–241 show a composition bias toward low complexity; the sequence is SHGSNLSSKSS. The 177-residue stretch at 1483-1659 folds into the PIK helical domain; the sequence is TEYAKTAFSV…NAAFQEILPQ (177 aa). Residues 1660 to 1773 form a pleckstrin homology (PH) domain conferring phosphoinositide binding specificity region; it reads VRQHIIDGFS…VKPQACIFKV (114 aa). In terms of domain architecture, PI3K/PI4K catalytic spans 1734–2012; sequence VDSGIPLQSA…VCTDAYNKWT (279 aa). The interval 1740-1746 is G-loop; sequence LQSAAKV. Residues 1876–1884 form a catalytic loop region; that stretch reads QPKDRHNGN. Residues 1895-1920 are activation loop; that stretch reads HIDFGFILETSPGGNMRFESAHFKLS.

This sequence belongs to the PI3/PI4-kinase family. Type III PI4K subfamily. Interacts in vitro with actin filaments via its PH domain. Present in leaves and inflorescences.

The protein localises to the membrane. It localises to the cytoplasm. It is found in the perinuclear region. The enzyme catalyses a 1,2-diacyl-sn-glycero-3-phospho-(1D-myo-inositol) + ATP = a 1,2-diacyl-sn-glycero-3-phospho-(1D-myo-inositol 4-phosphate) + ADP + H(+). Its activity is regulated as follows. Repressed by PtdIns4P, adenosine and wortmannin, but stimulated by other negatively charged lipids such as PtdIns3P, PtdOH, and phosphatidyl-serine (PtdSer). Its function is as follows. Acts on phosphatidylinositol (PtdIns) in the first committed step in the production of the second messenger inositol-1,4,5,-trisphosphate. Can bind to phosphatidylinositol 4-monophosphate (PI-4-P or PtdIns4P), phosphatidylinositol 4,5-bisphosphate (PI-4,5-P2 or PtdIns4,5P2), and phosphatidic acid (PtdOH), but not to 3-phosphoinositides. May function upstream of the cold response phosphoinositide-dependent phospholipase C (PI-PLC) pathway. The polypeptide is Phosphatidylinositol 4-kinase alpha 1 (Arabidopsis thaliana (Mouse-ear cress)).